The chain runs to 240 residues: Mannose-binding protein C (240 aa).

The first 18 residues, methionine 1–serine 18, serve as a signal peptide directing secretion. 2 Collagen-like domains span residues serine 39–proline 61 and glycine 67–glycine 97. The residue at position 46 (proline 46) is a Hydroxyproline. Residues lysine 48–asparagine 102 form a disordered region. Positions aspartate 49–glutamate 60 are enriched in basic and acidic residues. Hydroxyproline is present on residues proline 72, proline 81, and proline 87. Residues leucine 104–glutamine 122 adopt a coiled-coil conformation. In terms of domain architecture, C-type lectin spans valine 126–glutamate 237. 2 disulfide bridges follow: cysteine 147–cysteine 236 and cysteine 214–cysteine 228.

As to quaternary structure, interacts with MASP1 and MASP2. Interacts with MEP1A and MEP1B and may inhibit their catalytic activity. Forms oligomeric complexes of 2 or 3 homotrimers. Expressed in liver. Weakly expressed in kidney and testis.

The protein localises to the secreted. Calcium-dependent lectin involved in innate immune defense. Binds mannose, fucose and N-acetylglucosamine on different microorganisms and activates the lectin complement pathway. Binds to late apoptotic cells, as well as to apoptotic blebs and to necrotic cells, but not to early apoptotic cells, facilitating their uptake by macrophages. According to some authors, it only binds mannose. In Sus scrofa (Pig), this protein is Mannose-binding protein C.